Reading from the N-terminus, the 327-residue chain is Phenylalanine--tRNA ligase alpha subunit (327 aa).

Residue E252 participates in Mg(2+) binding.

Belongs to the class-II aminoacyl-tRNA synthetase family. Phe-tRNA synthetase alpha subunit type 1 subfamily. In terms of assembly, tetramer of two alpha and two beta subunits. Requires Mg(2+) as cofactor.

Its subcellular location is the cytoplasm. It catalyses the reaction tRNA(Phe) + L-phenylalanine + ATP = L-phenylalanyl-tRNA(Phe) + AMP + diphosphate + H(+). The protein is Phenylalanine--tRNA ligase alpha subunit of Edwardsiella ictaluri (strain 93-146).